The following is a 248-amino-acid chain: tRNA uridine(34) hydroxylase (248 aa).

Positions 127–221 (RGRPLVLLDT…YFEEVGGEGY (95 aa)) constitute a Rhodanese domain. The active-site Cysteine persulfide intermediate is Cys-181.

Belongs to the TrhO family.

It catalyses the reaction uridine(34) in tRNA + AH2 + O2 = 5-hydroxyuridine(34) in tRNA + A + H2O. Catalyzes oxygen-dependent 5-hydroxyuridine (ho5U) modification at position 34 in tRNAs. This Xanthomonas euvesicatoria pv. vesicatoria (strain 85-10) (Xanthomonas campestris pv. vesicatoria) protein is tRNA uridine(34) hydroxylase.